Consider the following 209-residue polypeptide: Large ribosomal subunit protein uL3 (209 aa).

The disordered stretch occupies residues 122–151 (AIKRHGQSRGPMSHGSRYHRRPGSMGPVDP).

It belongs to the universal ribosomal protein uL3 family. Part of the 50S ribosomal subunit. Forms a cluster with proteins L14 and L19.

Its function is as follows. One of the primary rRNA binding proteins, it binds directly near the 3'-end of the 23S rRNA, where it nucleates assembly of the 50S subunit. This Bacillus velezensis (strain DSM 23117 / BGSC 10A6 / LMG 26770 / FZB42) (Bacillus amyloliquefaciens subsp. plantarum) protein is Large ribosomal subunit protein uL3.